The primary structure comprises 194 residues: MAKRRAAEPVTFHVPWKRLLLCDFAEQPPPPPLWIRPPGVAHAGQLLGVPEQHRKRKIDAGTMAEPSASPSKRRDSGDNSAPSGQEREDHGLETGDPPLPPPPVLPGPGEELPGARLPGGGGDDGAGRAGPPRGDWGVASRQHNEEFWQYNTFQYWRNPLPPIDLADIEDLSEDTLTEATLQGRNEGAEVDMES.

The segment at 45 to 138 (QLLGVPEQHR…AGPPRGDWGV (94 aa)) is disordered. Phosphoserine occurs at positions 69 and 76. The span at 97–106 (PPLPPPPVLP) shows a compositional bias: pro residues. A compositionally biased stretch (low complexity) spans 107 to 116 (GPGEELPGAR). Gly residues predominate over residues 117-128 (LPGGGGDDGAGR).

This is an uncharacterized protein from Homo sapiens (Human).